A 224-amino-acid chain; its full sequence is Myogenin (224 aa).

Phosphoserine; by CaMK2G occurs at positions 77 and 79. The region spanning 81 to 132 (DRRRAATLREKRRLKKVNEAFEALKRSTLLNPNQRLPKVEILRSAIQYIERL) is the bHLH domain. Residue Thr87 is modified to Phosphothreonine; by CaMK2G.

Homodimer and heterodimer with E12; heterodimerization enhances MYOG DNA-binding and transcriptional activities. Interacts with SMARCA4/BRG1/BAF190A. Interacts (via C-terminal region) with SSRP1 and SUPT16H; the interaction is indicative of an interaction with the FACT complex. nteracts with CSRP3. Phosphorylated by CAMK2G on threonine and serine amino acids in a muscle activity-dependent manner. Phosphorylation of Thr-87 impairs both DNA-binding and trans-activation functions in contracting muscles. As to expression, expressed in myoblast cells. Expressed weakly in myotubes (at protein level). Expressed strongly in denervated muscles and in satellite cells isolated from denervated muscles. Expressed weakly in innervated muscle and in satellite cells isolated from innervated muscles.

It is found in the nucleus. Acts as a transcriptional activator that promotes transcription of muscle-specific target genes and plays a role in muscle differentiation, cell cycle exit and muscle atrophy. Essential for the development of functional embryonic skeletal fiber muscle differentiation. However is dispensable for postnatal skeletal muscle growth; phosphorylation by CAMK2G inhibits its transcriptional activity in respons to muscle activity. Required for the recruitment of the FACT complex to muscle-specific promoter regions, thus promoting gene expression initiation. During terminal myoblast differentiation, plays a role as a strong activator of transcription at loci with an open chromatin structure previously initiated by MYOD1. Together with MYF5 and MYOD1, co-occupies muscle-specific gene promoter core regions during myogenesis. Also cooperates with myocyte-specific enhancer factor MEF2D and BRG1-dependent recruitment of SWI/SNF chromatin-remodeling enzymes to alter chromatin structure at myogenic late gene promoters. Facilitates cell cycle exit during terminal muscle differentiation through the up-regulation of miR-20a expression, which in turn represses genes involved in cell cycle progression. Binds to the E-box containing (E1) promoter region of the miR-20a gene. Also plays a role in preventing reversal of muscle cell differentiation. Contributes to the atrophy-related gene expression in adult denervated muscles. Induces fibroblasts to differentiate into myoblasts. The sequence is that of Myogenin (Myog) from Mus musculus (Mouse).